A 193-amino-acid chain; its full sequence is Bcl-2-like protein 2 (193 aa).

A2 bears the N-acetylalanine mark. Positions D9–C29 match the BH4 motif. A BH1 motif is present at residues E85–A104. Residues D136–Y151 carry the BH2 motif. A177 is subject to Phosphoserine.

It belongs to the Bcl-2 family. Interacts with HIF3A (via C-terminus domain). Interacts with BOP. Expressed (at protein level) in a wide range of tissues with highest levels in brain, spinal cord, testis, pancreas, heart, spleen and mammary glands. Moderate levels found in thymus, ovary and small intestine. Not detected in salivary gland, muscle or liver. Also expressed in cell lines of myeloid, fibroblast and epithelial origin. Not detected in most lymphoid cell lines.

Its subcellular location is the mitochondrion membrane. Functionally, promotes cell survival. Blocks dexamethasone-induced apoptosis. Mediates survival of postmitotic Sertoli cells by suppressing death-promoting activity of BAX. The sequence is that of Bcl-2-like protein 2 (BCL2L2) from Homo sapiens (Human).